A 249-amino-acid polypeptide reads, in one-letter code: uncharacterized protein (249 aa).

Residues 7–64 (PRVHVFLAEKGVGSRRFCEELIRKKLVRVNNTIAKLGDKVTLGDRIIYKKQIFVFKDF) form the S4 RNA-binding domain. Asp112 (nucleophile) is an active-site residue.

The protein belongs to the pseudouridine synthase RsuA family.

It catalyses the reaction a uridine in RNA = a pseudouridine in RNA. This is an uncharacterized protein from Borreliella burgdorferi (strain ATCC 35210 / DSM 4680 / CIP 102532 / B31) (Borrelia burgdorferi).